The primary structure comprises 357 residues: Protein RecA (357 aa).

ATP is bound at residue 73 to 80 (GPESSGKT).

Belongs to the RecA family.

The protein resides in the cytoplasm. Its function is as follows. Can catalyze the hydrolysis of ATP in the presence of single-stranded DNA, the ATP-dependent uptake of single-stranded DNA by duplex DNA, and the ATP-dependent hybridization of homologous single-stranded DNAs. It interacts with LexA causing its activation and leading to its autocatalytic cleavage. The chain is Protein RecA from Nitratidesulfovibrio vulgaris (strain DSM 19637 / Miyazaki F) (Desulfovibrio vulgaris).